The sequence spans 1968 residues: MAVTYRTPMEDIVNCFEPATQAVIANSAATLYKNFEEQHCQYFNYYLSPLAKRKLSMAGIYLSPYSAVVHSHPVCKTLENYILYSVLPSYINSSFYFVGIKERKLQLLKSKCKNLDSVQVVNRYVTSADRMRYTNDFVPYGSYEHECLVHKGVGLDNEALRGLVGPLRRHKAKNLFFHDELHYWSSKVLIDFLDVMRPDKLLGTVVYPPELLFKPTRSLNEWCYTYDIVGDTLMFFPDGVQSEGYQQPLKGGYLLGARSLKLPDGTVYMVDVLCSKFPHHLISITKGEAAAPTHRAFGPFEAVASEALKATLSPDYPCAFPVSYEVVNKIYRYLRTLKKPDEQSAIAKLSQIIAEPSGREIDFVECFARLVIHNSSMCATIMPEQLKEFMGNWLGKMPSVLARRFSSVRAVCVNKFIRGLKPYSFTLRLNEITWWNIWENSYAWFFDTDAEVDVPEKLDSLFMGEGAGLVAHITSRPYVGTVPLADREWNALLCMDSQKLLHAMRRMFMRGAWGAHMCVISREFLLKYVEARLKSSCLIAKARRRGQHKEKLEAWEVLGLKSSDALFRAMTYLCNARLEPMFSESGLRFFLTRGRNNLYGLTNYTEGKRAVTGVQNLWSNVVHEVSTKRHKGMIRLEKARVTEQPRSEFASCVLEPEVWRDVEAALDIELGEVACACNARFVQGVVLSNQAGLNVREQVAGASVGLYTKDRSNLKWGNSELLSNGWGRSLSVWMEINSVSQKFDVAVRLSYSKETQMNVLLPSLDGIERGAGATVVNLRKCGAFIVRCARGWRLALAWMDHICLEVMANVAYGHECYMRSWGTMDVVVFLKRATVSEQVTFESAQEVGPIEGKSDSGAPGVGVNLDLGGVVGSEYPANGAERYKRVSGPGDGCCCWHSFAYLVGMHHMELKRLCTSHVFENAALNVELEQCKASGAFVTHAAILATALRLRAEIRVHNAGTGRVHRFAPKQKNMALDLWLESEHYEPQVLRNGCVIESVAQALGTRNADILAVVEERCCEEVVESVQAGLGLNLHHVEIVLQCFDIVGHCNLGDKEITLNAGGKMPFCFDISDEHMSFCGRRKDPICKLVSGALHGKMFAESALLDLENCGLKIDFEPNWNRAGMLADSMYQGATGVLGSALFNNKRNMREKFVRNVSLSLHAIVGTFGSGKSTLFKNLLKYGAGKSLDFVSPRRALAEDFKRTVGMNERGGRAKAGQENWRVTTLETFLARVEFLTEGQVVILDEMQLYPPGYFDLVVSMLKVDVRLFLVGDPAQSDYDSEKDRLVLGAMEENMSVVLGAREYNYKVRSHRFLNCNFIGRLPCEINKDDCTIDEPHIMRMHLENLLDVAEEYKSVVLVSSFDEKMVVCAHLPEAKVLTFGESTGLTFMHGTIYISAVSERTNERRWITALRRFRFNLCFVNCSGMDYQQLAGRYKGRVRSKFLCKTAIPDDLNSMLPGQALFKSEYPRLIGKDEGVREEKLAGDPWLKTMINLYQAPEVEIAEEPEVVMQEEWFRTHLPRDELESVRAQWVHKILAKEYREVRMGDMVSEQFTHDHTKQLGAKQLTNAAERFETIYPRHRASDTVTFLMAVKKRLSFSNPGKEKGNLFHAASYGKALLSEFLKRVPLKPNHNVRFMEEALWNFEEKKLSKSAATIENHSGRSCRDWPTDVAQIFSKSQLCTKFDNRFRVAKAAQSIVCFQHAVLCRFAPYMRYIEMKVHEVLPKNYYIHSGKGLEELDAWVKKGKFDRICTESDYEAFDASQDEFIMAFELELMKYLRLPSDLIEDYKFIKTSLGSKLGNFAIMRFSGEASTFLFNTLANMLFTFMRYNIRGDEFICFAGDDMCASRRLQPTKKFAHFLDKLKLKAKVQFVQFVNKPTFCGWHLCPDGIYKKPQLVLERMCIAKEMNNLSNCIDNYAIEVAYAYKLGEKAVNRMDEEEVAAFYNCVRIIVRNKHLIRSDVKQVFEVL.

An Alphavirus-like MT domain is found at 63–254 (SPYSAVVHSH…YQQPLKGGYL (192 aa)). Residues 883-991 (YKRVSGPGDG…SEHYEPQVLR (109 aa)) enclose the OTU domain. The Peptidase C23 domain maps to 990 to 1080 (LRNGCVIESV…ISDEHMSFCG (91 aa)). Catalysis depends on residues cysteine 994 and histidine 1075. The (+)RNA virus helicase ATP-binding domain maps to 1134 to 1316 (ATGVLGSALF…KVRSHRFLNC (183 aa)). 1166–1173 (GTFGSGKS) contacts ATP. In terms of domain architecture, (+)RNA virus helicase C-terminal spans 1317–1454 (NFIGRLPCEI…CKTAIPDDLN (138 aa)). The RdRp catalytic domain maps to 1749 to 1856 (RICTESDYEA…SRRLQPTKKF (108 aa)).

Belongs to the potexviruses/carlaviruses RNA replication protein family. In terms of processing, specific enzymatic cleavages by the viral protease yield mature proteins.

The enzyme catalyses RNA(n) + a ribonucleoside 5'-triphosphate = RNA(n+1) + diphosphate. The catalysed reaction is ATP + H2O = ADP + phosphate + H(+). In terms of biological role, RNA-directed RNA polymerase involved in viral RNA replication. Functionally, protease: Thiol protease that cleaves the polyprotein. This Solanum tuberosum (Potato) protein is RNA replication polyprotein.